Reading from the N-terminus, the 124-residue chain is Urease subunit beta (124 aa).

This sequence belongs to the urease beta subunit family. Heterotrimer of UreA (gamma), UreB (beta) and UreC (alpha) subunits. Three heterotrimers associate to form the active enzyme.

Its subcellular location is the cytoplasm. The enzyme catalyses urea + 2 H2O + H(+) = hydrogencarbonate + 2 NH4(+). It functions in the pathway nitrogen metabolism; urea degradation; CO(2) and NH(3) from urea (urease route): step 1/1. This chain is Urease subunit beta, found in Ureaplasma urealyticum serovar 10 (strain ATCC 33699 / Western).